The sequence spans 518 residues: Sensor protein kinase HptS (518 aa).

2 consecutive transmembrane segments (helical) span residues 20–40 and 222–242; these read IFPV…IYIW and GITL…FGFI. One can recognise a Histidine kinase domain in the interval 297–513; that stretch reads EQLIHSIEHT…LICYKIPLSR (217 aa). At histidine 325 the chain carries Phosphohistidine; by autocatalysis.

Autophosphorylated.

The protein resides in the cell membrane. The enzyme catalyses ATP + protein L-histidine = ADP + protein N-phospho-L-histidine.. In terms of biological role, member of the two-component regulatory system HptS/HptR that regulates genes involved in hexose phosphate transport system in response to changes in extracellular phosphate sources. May act as a sensor protein kinase which is autophosphorylated at a histidine residue and transfers its phosphate group to the conserved aspartic acid residue in the regulatory domain of HptS. In turn, HptS antagonizes CcpA-dependent transcription of a subset of CcpA-regulated genes involved in antibiotic susceptibility. In Staphylococcus aureus (strain USA300), this protein is Sensor protein kinase HptS (hptS).